The primary structure comprises 286 residues: Putative chaperone BssE (286 aa).

ATP is bound by residues 47 to 54 (GKQGCGKS) and 108 to 115 (GCVIHLEE).

Belongs to the CbbQ/NirQ/NorQ/GpvN family.

Its function is as follows. May have a role in assembly and/or activation of benzylsuccinate synthase. The protein is Putative chaperone BssE (bssE) of Thauera aromatica.